A 65-amino-acid chain; its full sequence is MKKVEIKKKTIKELNIELMNLLREQFNLTLQHSAKKLQQSHLLQHVRRNIAQVNTILAEKEKECD.

The protein belongs to the universal ribosomal protein uL29 family.

This Buchnera aphidicola subsp. Baizongia pistaciae (strain Bp) protein is Large ribosomal subunit protein uL29.